The chain runs to 315 residues: tRNA pseudouridine synthase B (315 aa).

Residue Asp47 is the Nucleophile of the active site.

This sequence belongs to the pseudouridine synthase TruB family. Type 1 subfamily.

It catalyses the reaction uridine(55) in tRNA = pseudouridine(55) in tRNA. Responsible for synthesis of pseudouridine from uracil-55 in the psi GC loop of transfer RNAs. The polypeptide is tRNA pseudouridine synthase B (Shewanella pealeana (strain ATCC 700345 / ANG-SQ1)).